The sequence spans 224 residues: Putative O-methyltransferase MT1258 (224 aa).

The segment covering 1–10 (MDGTPGHDDM) has biased composition (basic and acidic residues). A disordered region spans residues 1–21 (MDGTPGHDDMPGQPAPSRGES). S-adenosyl-L-methionine is bound by residues Val51, Glu73, 75–76 (GT), Ser81, Asp99, and Ile100. Position 147 (Asp147) interacts with substrate. Asp149 contacts S-adenosyl-L-methionine.

Belongs to the class I-like SAM-binding methyltransferase superfamily. Cation-dependent O-methyltransferase family.

This chain is Putative O-methyltransferase MT1258, found in Mycobacterium tuberculosis (strain CDC 1551 / Oshkosh).